Consider the following 70-residue polypeptide: Conotoxin elongated-tx3a-a (70 aa).

An N-terminal signal peptide occupies residues 1-24 (MLKMGVVLFIFLVLFPLATLQLDA). A propeptide spanning residues 25–44 (DQPVERYAENKQLLSPDERR) is cleaved from the precursor. 3 cysteine pairs are disulfide-bonded: Cys55–Cys68, Cys56–Cys66, and Cys61–Cys69. Trp58 is subject to 6'-bromotryptophan; partial. A Cysteine amide; partial modification is found at Cys69.

Belongs to the conotoxin M superfamily. Post-translationally, two short peptides are produced from this precursor; Conotoxin tx3a-b is amidated at Cys-69 (but has no bromotryptophan), whereas conotoxin tx3a-a has an unmodified Gly-70 and a bromotryptophan. Two elongated peptides are also produced; Conotoxin elongated-tx3a-b is amidated at Cys-69 (but has no bromotryptophan), whereas conotoxin elongated tx3a-a has an unmodified Gly-70 (but has no bromotryptophan). In terms of processing, ju et al. (2022) describe a disulfide connectivity (C55-C61; C56-C69; C66-C68) that differs from that of Han and colleagues (2006), McDougal et al. (2008), and Ueberheide et al. (2009). Expressed by the venom duct. Is present in all duct parts with a highest content in part 2 (proximal of the venom bulb) and then decreases in concentration toward the end of the duct.

It is found in the secreted. Functionally, intracranial injection into mice causes scratching and hyperactivity. In vitro, inhibits proliferation of the mice ovarian cancer cells ID8. In Conus textile (Cloth-of-gold cone), this protein is Conotoxin elongated-tx3a-a.